We begin with the raw amino-acid sequence, 143 residues long: Transcriptional regulator MraZ (143 aa).

SpoVT-AbrB domains follow at residues threonine 5 to glutamate 47 and alanine 76 to alanine 119.

Belongs to the MraZ family. In terms of assembly, forms oligomers.

It is found in the cytoplasm. The protein localises to the nucleoid. This chain is Transcriptional regulator MraZ, found in Corynebacterium urealyticum (strain ATCC 43042 / DSM 7109).